Here is a 156-residue protein sequence, read N- to C-terminus: Small ribosomal subunit protein uS7 (156 aa).

The protein belongs to the universal ribosomal protein uS7 family. Part of the 30S ribosomal subunit. Contacts proteins S9 and S11.

One of the primary rRNA binding proteins, it binds directly to 16S rRNA where it nucleates assembly of the head domain of the 30S subunit. Is located at the subunit interface close to the decoding center, probably blocks exit of the E-site tRNA. In Klebsiella pneumoniae subsp. pneumoniae (strain ATCC 700721 / MGH 78578), this protein is Small ribosomal subunit protein uS7.